Here is a 742-residue protein sequence, read N- to C-terminus: CD44 antigen (742 aa).

An N-terminal signal peptide occupies residues Met1–Ala20. Residues Gln21 to Glu649 lie on the Extracellular side of the membrane. The N-linked (GlcNAc...) asparagine glycan is linked to Asn25. Cystine bridges form between Cys28-Cys129, Cys53-Cys118, and Cys77-Cys97. A Link domain is found at Gly32–Asn120. Residue Arg41 participates in hyaluronan binding. A glycan (N-linked (GlcNAc...) asparagine) is linked at Asn57. Hyaluronan contacts are provided by Arg78 and Tyr79. N-linked (GlcNAc...) asparagine glycosylation is present at Asn100. Tyr105 is a hyaluronan binding site. 2 N-linked (GlcNAc...) asparagine glycosylation sites follow: Asn110 and Asn120. 2 disordered regions span residues Glu160 to Thr189 and Thr261 to Glu285. Residues Ser179–Thr189 are compositionally biased toward low complexity. A glycan (O-linked (Xyl...) (chondroitin sulfate) serine) is linked at Ser180. The segment at Leu224–Glu649 is stem. Residues Thr261 to Ser273 are compositionally biased toward polar residues. Asn350 carries N-linked (GlcNAc...) asparagine glycosylation. Disordered regions lie at residues His372–Glu558 and Thr590–Ile642. Positions Gln386–Thr396 are enriched in low complexity. Residues Arg407–His421 are compositionally biased toward basic and acidic residues. Low complexity predominate over residues Ser422–His435. 2 stretches are compositionally biased toward polar residues: residues Gly439–Asp452 and Ser476–Thr489. Residues Ser502–Ser516 show a composition bias toward low complexity. A compositionally biased stretch (polar residues) spans Thr528–Asp539. N-linked (GlcNAc...) asparagine glycans are attached at residues Asn548 and Asn599. Over residues Gly592 to Gln606 the composition is skewed to polar residues. Residues His619 to Gly629 show a composition bias toward basic and acidic residues. An N-linked (GlcNAc...) asparagine glycan is attached at Asn636. A helical transmembrane segment spans residues Trp650–Val670. Residues Asn671 to Val742 lie on the Cytoplasmic side of the membrane. The residue at position 672 (Ser672) is a Phosphoserine; by PKC. Residues Arg673–Val691 form a required for interaction with EZR, MSN and RDX and for co-localization to microvilli region. Phosphoserine occurs at positions 686, 697, and 706.

In terms of assembly, interacts with PKN2. Interacts with TIAM1 and TIAM2. Interacts with HA, as well as other glycosaminoglycans, collagen, laminin, and fibronectin via its N-terminal segment. Interacts with UNC119. Interacts with PDPN (via extracellular domain); this interaction is required for PDPN-mediated directional migration and regulation of lamellipodia extension/stabilization during cell spreading and migration. Interacts with RDX, EZR and MSN. Interacts with EGFR. Interacts with CD74; this complex is essential for the MIF-induced signaling cascade that results in B cell survival. Proteolytically cleaved in the extracellular matrix by specific proteinases (possibly MMPs) in several cell lines and tumors. In terms of processing, N-glycosylated. Post-translationally, O-glycosylated; contains chondroitin sulfate glycans which can be more or less sulfated and whose number may affect the accessibility of specific proteinases to their cleavage site(s). It is uncertain if O-glycosylation occurs on Thr-637 or Thr-638. Phosphorylated; activation of PKC results in the dephosphorylation of Ser-706 (constitutive phosphorylation site), and the phosphorylation of Ser-672. Detected in fibroblasts and urine (at protein level). Detected in placenta (at protein level). Isoform 10 (epithelial isoform) is expressed by cells of epithelium and highly expressed by carcinomas. Expression is repressed in neuroblastoma cells.

The protein resides in the cell membrane. The protein localises to the cell projection. Its subcellular location is the microvillus. It localises to the secreted. In terms of biological role, cell-surface receptor that plays a role in cell-cell interactions, cell adhesion and migration, helping them to sense and respond to changes in the tissue microenvironment. Participates thereby in a wide variety of cellular functions including the activation, recirculation and homing of T-lymphocytes, hematopoiesis, inflammation and response to bacterial infection. Engages, through its ectodomain, extracellular matrix components such as hyaluronan/HA, collagen, growth factors, cytokines or proteases and serves as a platform for signal transduction by assembling, via its cytoplasmic domain, protein complexes containing receptor kinases and membrane proteases. Such effectors include PKN2, the RhoGTPases RAC1 and RHOA, Rho-kinases and phospholipase C that coordinate signaling pathways promoting calcium mobilization and actin-mediated cytoskeleton reorganization essential for cell migration and adhesion. The sequence is that of CD44 antigen (CD44) from Homo sapiens (Human).